Consider the following 212-residue polypeptide: Glycerol-3-phosphate acyltransferase (212 aa).

A run of 4 helical transmembrane segments spans residues 3-23 (ILLA…VVVS), 78-98 (DVAV…PVFF), 115-135 (AVHP…AFFF), and 155-177 (FLFG…LLVW).

The protein belongs to the PlsY family. Probably interacts with PlsX.

Its subcellular location is the cell inner membrane. The catalysed reaction is an acyl phosphate + sn-glycerol 3-phosphate = a 1-acyl-sn-glycero-3-phosphate + phosphate. It functions in the pathway lipid metabolism; phospholipid metabolism. Its function is as follows. Catalyzes the transfer of an acyl group from acyl-phosphate (acyl-PO(4)) to glycerol-3-phosphate (G3P) to form lysophosphatidic acid (LPA). This enzyme utilizes acyl-phosphate as fatty acyl donor, but not acyl-CoA or acyl-ACP. The polypeptide is Glycerol-3-phosphate acyltransferase (Burkholderia lata (strain ATCC 17760 / DSM 23089 / LMG 22485 / NCIMB 9086 / R18194 / 383)).